The sequence spans 325 residues: 5-dehydro-2-deoxygluconokinase (325 aa).

The protein belongs to the carbohydrate kinase PfkB family.

It catalyses the reaction 5-dehydro-2-deoxy-D-gluconate + ATP = 6-phospho-5-dehydro-2-deoxy-D-gluconate + ADP + H(+). It functions in the pathway polyol metabolism; myo-inositol degradation into acetyl-CoA; acetyl-CoA from myo-inositol: step 5/7. Functionally, catalyzes the phosphorylation of 5-dehydro-2-deoxy-D-gluconate (2-deoxy-5-keto-D-gluconate or DKG) to 6-phospho-5-dehydro-2-deoxy-D-gluconate (DKGP). This is 5-dehydro-2-deoxygluconokinase from Listeria innocua serovar 6a (strain ATCC BAA-680 / CLIP 11262).